The primary structure comprises 686 residues: Protein SDA1 homolog (686 aa).

Phosphoserine occurs at positions 232, 234, and 236. A coiled-coil region spans residues 254–315 (KKGSKNKKKL…SCKERFEVKM (62 aa)). Residues 484 to 508 (LEKEENTENDEDGWESASLSEEEED) are disordered. Over residues 490–508 (TENDEDGWESASLSEEEED) the composition is skewed to acidic residues. Thr551 carries the post-translational modification Phosphothreonine. A disordered region spans residues 563–586 (MKKEMDAAPGKAQKRKYLDMDSDE). A phosphoserine mark is found at Ser584, Ser588, and Ser594. Positions 604-649 (KPKSDKETRLATAMAGRTDRKEFVRKKTKINPFSSSTNKEKKKQKN) are disordered.

The protein belongs to the SDA1 family.

It is found in the nucleus. Its subcellular location is the nucleolus. Its function is as follows. Required for 60S pre-ribosomal subunits export to the cytoplasm. The sequence is that of Protein SDA1 homolog (Sdad1) from Rattus norvegicus (Rat).